A 664-amino-acid polypeptide reads, in one-letter code: Kinesin-like protein KIF2B (664 aa).

Residue threonine 125 is modified to Phosphothreonine; by PLK1. Positions 149-177 (CLREIEKLQKQREKRRRLQLEIRARRALD) form a coiled coil. Serine 204 is modified (phosphoserine; by PLK1). Residues 213–543 (RICVCVRKRP…LRYANRVKEL (331 aa)) form the Kinesin motor domain. 303–310 (GQTGSGKT) contributes to the ATP binding site. The disordered stretch occupies residues 583 to 607 (VQKEEEKESDELTSTKEPAASWSRS). Residues 642–663 (VLTEIQKKLQLLRDDLQKKSQA) are a coiled coil.

The protein belongs to the TRAFAC class myosin-kinesin ATPase superfamily. Kinesin family. MCAK/KIF2 subfamily. Post-translationally, phosphorylation at Thr-125 by PLK1 is required for activity in the correction of kinetochore-microtubules attachment errors, while phosphorylation at Ser-204 also by PLK1 is required for the kinetochore localization and activity in prometaphase.

The protein localises to the cytoplasm. The protein resides in the cytoskeleton. It localises to the microtubule organizing center. Its subcellular location is the centrosome. It is found in the spindle. The protein localises to the chromosome. The protein resides in the centromere. It localises to the kinetochore. Functionally, plus end-directed microtubule-dependent motor required for spindle assembly and chromosome movement. Has microtubule depolymerization activity. Plays a role in chromosome congression. The sequence is that of Kinesin-like protein KIF2B from Rattus norvegicus (Rat).